The chain runs to 352 residues: Homeobox protein Mohawk (352 aa).

The disordered stretch occupies residues 19-53 (GASERERGGRPYSGVLDSPHARPEVGIADGPPLKD). Residues 71–132 (VRHKRQALQD…NARRRLKNTV (62 aa)) constitute a DNA-binding region (homeobox; TALE-type). 2 disordered regions span residues 157–194 (LSVS…IKSE) and 245–272 (TRQR…SETE).

Belongs to the TALE/IRO homeobox family.

It is found in the nucleus. In terms of biological role, may act as a morphogenetic regulator of cell adhesion. In Pongo abelii (Sumatran orangutan), this protein is Homeobox protein Mohawk (MKX).